A 345-amino-acid chain; its full sequence is Opioid-binding protein/cell adhesion molecule (345 aa).

A signal peptide spans 1-27; sequence MGVCGSLFQPWKCLVVVSLRLLFLVPT. Ig-like C2-type domains are found at residues 39–126, 136–219, and 223–310; these read PKAM…PKTS, PQIM…VKIT, and PPYI…ASIT. N-linked (GlcNAc...) asparagine glycans are attached at residues Asn44, Asn70, and Asn140. An intrachain disulfide couples Cys57 to Cys115. 2 cysteine pairs are disulfide-bonded: Cys157–Cys202 and Cys244–Cys296. N-linked (GlcNAc...) asparagine glycans are attached at residues Asn285, Asn293, and Asn306. Asn322 carries GPI-anchor amidated asparagine lipidation. A propeptide spans 323-345 (removed in mature form); sequence SASRALACLWLSGTLFAHFFIKF.

Belongs to the immunoglobulin superfamily. IgLON family.

It localises to the cell membrane. Its function is as follows. Binds opioids in the presence of acidic lipids; probably involved in cell contact. This Bos taurus (Bovine) protein is Opioid-binding protein/cell adhesion molecule (OPCML).